We begin with the raw amino-acid sequence, 323 residues long: MLKSTVSNTRIKCCRIDQRRNYLFTALASSALGSFLWSKNNVLASKMENGELHYHDPNLTFNKKLFNGKPPFERRAPDYPGHVPLYNFEKVLMFLGSSMGAFFHPEENKYIVALGESTAITPILQHLRHKMLSDPVGRTILREKPRMTSDSLNLTYLRSLPDNTIGKNYVNWLDKENVSPDTRVPVRYIDNEELAYIYQRYRECHDFYHAITGLPIIIEGEIAVKVFEFANIGIPMSGLGALFAPLRLKPSQRQRLREIYYPWAIKNGLFSKPLINVYWEKILEKDVNEFRQEMGIQQPPDLRNMRKEYFAKKKLEKQLQGRK.

Residues 1–29 (MLKSTVSNTRIKCCRIDQRRNYLFTALAS) constitute a mitochondrion transit peptide. Positions 205, 206, 209, and 221 each coordinate Zn(2+).

Belongs to the COQ4 family. As to quaternary structure, component of a multi-subunit COQ enzyme complex, composed of at least COQ3, COQ4, COQ5, COQ6, COQ7 and COQ9. Requires Zn(2+) as cofactor.

The protein resides in the mitochondrion inner membrane. The enzyme catalyses a 4-hydroxy-3-methoxy-5-(all-trans-polyprenyl)benzoate + H(+) = a 2-methoxy-6-(all-trans-polyprenyl)phenol + CO2. It participates in cofactor biosynthesis; ubiquinone biosynthesis. In terms of biological role, lyase that catalyzes the C1-decarboxylation of 4-hydroxy-3-methoxy-5-(all-trans-polyprenyl)benzoic acid into 2-methoxy-6-(all-trans-polyprenyl)phenol during ubiquinone biosynthesis. This Candida dubliniensis (strain CD36 / ATCC MYA-646 / CBS 7987 / NCPF 3949 / NRRL Y-17841) (Yeast) protein is Ubiquinone biosynthesis protein COQ4, mitochondrial.